Consider the following 498-residue polypeptide: WD repeat-containing protein 55 homolog (498 aa).

The interval 1–131 (MHTHNNFKTP…ATFDLDEDDE (131 aa)) is disordered. Composition is skewed to acidic residues over residues 12–23 (DEDELDDLDEDM) and 31–48 (IEQE…EYDL). WD repeat units follow at residues 154–193 (KLED…NKLL), 198–237 (VHSK…LKKL), 241–279 (AHDD…AIFE), 282–321 (ELED…MYVQ), 324–363 (PYEE…YHCD), and 408–447 (QHNM…DFGE).

It belongs to the WD repeat WDR55 family.

The polypeptide is WD repeat-containing protein 55 homolog (Drosophila simulans (Fruit fly)).